Consider the following 30-residue polypeptide: RICPRILMECSSDSDCLAECICLEQDGFCG.

3 disulfide bridges follow: cysteine 3–cysteine 20, cysteine 10–cysteine 22, and cysteine 16–cysteine 29.

It belongs to the protease inhibitor I7 (squash-type serine protease inhibitor) family.

It localises to the secreted. In terms of biological role, inhibits trypsin. This is Trypsin inhibitor 2 from Luffa aegyptiaca (Sponge gourd).